The following is a 97-amino-acid chain: Insertion element IS2 uncharacterized 11.1 kDa protein (97 aa).

In Escherichia coli, this protein is Insertion element IS2 uncharacterized 11.1 kDa protein.